Here is a 190-residue protein sequence, read N- to C-terminus: Succinate dehydrogenase assembly factor 2, mitochondrial (190 aa).

It belongs to the SDHAF2 family. In terms of assembly, interacts with the flavoprotein subunit within the SDH catalytic dimer.

It localises to the mitochondrion matrix. Plays an essential role in the assembly of succinate dehydrogenase (SDH), an enzyme complex (also referred to as respiratory complex II) that is a component of both the tricarboxylic acid (TCA) cycle and the mitochondrial electron transport chain, and which couples the oxidation of succinate to fumarate with the reduction of ubiquinone (coenzyme Q) to ubiquinol. Required for flavinylation (covalent attachment of FAD) of the flavoprotein subunit of the SDH catalytic dimer. This Komagataella phaffii (strain GS115 / ATCC 20864) (Yeast) protein is Succinate dehydrogenase assembly factor 2, mitochondrial.